The sequence spans 323 residues: MQVLKINPRGYCYGVVDAMVIARNAALDKTLPRPIYILGMIVHNKHVTDAFEEDGIITLDGDNRLEIIEQVESGTVIFTAHGVSPEIRDIAKRKGLVSIDATCPDVTVTHDLIREKSAEGYDIIYIGKKGHPEPEGAIGVAPDHVHLVQSSNDIDSLNLTNDKLLVTNQTTMSQWDVAHLMDSLKEKFPHIEVHKEICLATQVRQEAVAQQAGEADLLIVVGDPKSNNSNRLTQVSVEIAGTPSYRIADVSELKIDWLKGINKVAVTAGASTPTPIVKEVISFLDQFDENDPSTHVIKRTVTLDKILPKIKTPKPVDKIMPHK.

C12 provides a ligand contact to [4Fe-4S] cluster. 2 residues coordinate (2E)-4-hydroxy-3-methylbut-2-enyl diphosphate: H43 and H81. Dimethylallyl diphosphate is bound by residues H43 and H81. H43 and H81 together coordinate isopentenyl diphosphate. C103 provides a ligand contact to [4Fe-4S] cluster. Position 131 (H131) interacts with (2E)-4-hydroxy-3-methylbut-2-enyl diphosphate. Residue H131 participates in dimethylallyl diphosphate binding. H131 is an isopentenyl diphosphate binding site. E133 serves as the catalytic Proton donor. T170 contacts (2E)-4-hydroxy-3-methylbut-2-enyl diphosphate. [4Fe-4S] cluster is bound at residue C198. Positions 226, 228, and 271 each coordinate (2E)-4-hydroxy-3-methylbut-2-enyl diphosphate. 3 residues coordinate dimethylallyl diphosphate: S226, N228, and S271. 3 residues coordinate isopentenyl diphosphate: S226, N228, and S271.

Belongs to the IspH family. The cofactor is [4Fe-4S] cluster.

The catalysed reaction is isopentenyl diphosphate + 2 oxidized [2Fe-2S]-[ferredoxin] + H2O = (2E)-4-hydroxy-3-methylbut-2-enyl diphosphate + 2 reduced [2Fe-2S]-[ferredoxin] + 2 H(+). The enzyme catalyses dimethylallyl diphosphate + 2 oxidized [2Fe-2S]-[ferredoxin] + H2O = (2E)-4-hydroxy-3-methylbut-2-enyl diphosphate + 2 reduced [2Fe-2S]-[ferredoxin] + 2 H(+). It participates in isoprenoid biosynthesis; dimethylallyl diphosphate biosynthesis; dimethylallyl diphosphate from (2E)-4-hydroxy-3-methylbutenyl diphosphate: step 1/1. Its pathway is isoprenoid biosynthesis; isopentenyl diphosphate biosynthesis via DXP pathway; isopentenyl diphosphate from 1-deoxy-D-xylulose 5-phosphate: step 6/6. Its function is as follows. Catalyzes the conversion of 1-hydroxy-2-methyl-2-(E)-butenyl 4-diphosphate (HMBPP) into a mixture of isopentenyl diphosphate (IPP) and dimethylallyl diphosphate (DMAPP). Acts in the terminal step of the DOXP/MEP pathway for isoprenoid precursor biosynthesis. In Lysinibacillus sphaericus (strain C3-41), this protein is 4-hydroxy-3-methylbut-2-enyl diphosphate reductase.